We begin with the raw amino-acid sequence, 222 residues long: MASGYGDASQKIDYVFKVVLIGDSAVGKTQILARFARNEFSLDSKATIGVEFQTRTLVIQHKSVKAQIWDTAGQERYRAVTSAYYRGAVGAMLVYDITKRQTFDHIPRWLEELRAHADRNIVIMLTGNKTDLEDQRAVPTEDAKEFAQKEGLFFLETSAMEATKLEDAFLTVLTEIFNIVNKKNLAADENQSNSNPASLTGKKILVPGPGQVIPGKKACCSS.

Residue 22 to 29 (GDSAVGKT) coordinates GTP. Positions 44-52 (SKATIGVEF) match the Effector region motif. Residues 70–74 (DTAGQ) and 128–131 (NKTD) contribute to the GTP site. S-geranylgeranyl cysteine attachment occurs at residues cysteine 219 and cysteine 220.

Belongs to the small GTPase superfamily. Rab family.

The protein resides in the cell membrane. The polypeptide is Ras-related protein Rab11C (RAB11C) (Nicotiana tabacum (Common tobacco)).